A 293-amino-acid chain; its full sequence is Homeobox protein ceh-24 (293 aa).

2 stretches are compositionally biased toward basic and acidic residues: residues 1–15 (MSEK…KKDE) and 22–38 (QETK…MKIK). Disordered stretches follow at residues 1–38 (MSEK…MKIK) and 203–256 (EKEK…SNGV). A DNA-binding region (homeobox) is located at residues 144-203 (RRKRRVLFSQAQVYELERRFKQAKYLTAPEREQLANSIRLTPTQVKIWFQNHRYKCKRQE).

The protein belongs to the NK-2 homeobox family. In terms of tissue distribution, expressed in the 8 vulval muscles, 8-10 ventral neurons in the head and in the most posterior pharyngeal muscle cell, m8.

The protein localises to the nucleus. Probable transcriptional regulator that is required in neural development for the normal formation of sublateral cholinergic motor neuron processes. Plays a role in regulating the expression of acetylcholine transporter protein unc-17 in the sublateral processes. In particular, it is required in sublateral motor neurons for a left-right turning behavior that occurs during the lethargus phase of the normal sleep process called 'flipping'. During 'flipping' animals rotate 180 degrees about their longitudinal axis. The polypeptide is Homeobox protein ceh-24 (Caenorhabditis briggsae).